The primary structure comprises 613 residues: Probable Xaa-Pro aminopeptidase P (613 aa).

Mn(2+) is bound by residues Asp408, Asp419, Glu517, and Glu531.

Belongs to the peptidase M24B family. Mn(2+) serves as cofactor.

It carries out the reaction Release of any N-terminal amino acid, including proline, that is linked to proline, even from a dipeptide or tripeptide.. Catalyzes the removal of a penultimate prolyl residue from the N-termini of peptides. The polypeptide is Probable Xaa-Pro aminopeptidase P (ampp) (Penicillium rubens (strain ATCC 28089 / DSM 1075 / NRRL 1951 / Wisconsin 54-1255) (Penicillium chrysogenum)).